The chain runs to 567 residues: TNF receptor-associated factor 3 (567 aa).

The tract at residues 1-26 (MESSKKMDAAGTLQPNPPLKLQPDRG) is disordered. A Glycyl cysteine thioester (Cys-Gly) (interchain with G-Cter in ubiquitin) cross-link involves residue Cys-55. The RING-type zinc finger occupies 67 to 76 (CGHRFCESCM). Lys-106 is covalently cross-linked (Glycyl lysine isopeptide (Lys-Gly) (interchain with G-Cter in ubiquitin)). A Glycyl cysteine thioester (Cys-Gly) (interchain with G-Cter in ubiquitin) cross-link involves residue Cys-123. 2 consecutive TRAF-type zinc fingers follow at residues 134 to 189 (VHLK…IKLQ) and 190 to 248 (KHED…QQIK). Glycyl lysine isopeptide (Lys-Gly) (interchain with G-Cter in ubiquitin) cross-links involve residues Lys-155 and Lys-167. Residues 266–337 (SNSLEKKVSL…KLKELDKEIR (72 aa)) are a coiled coil. Lys-328 is covalently cross-linked (Glycyl lysine isopeptide (Lys-Gly) (interchain with G-Cter in ubiquitin)). An MATH domain is found at 414–559 (NGVLIWKIRD…DDTIFIKVIV (146 aa)).

Belongs to the TNF receptor-associated factor family. A subfamily. In terms of assembly, homotrimer. Heterotrimer with TRAF2 and TRAF5. Interacts with LTBR/TNFRSF3, TNFRSF4, TNFRSF5/CD40, TNFRSF8/CD30, TNFRSF13C TNFRSF17/BCMA, TLR4 and EDAR. Interacts with MAP3K5, MAP3K14, TRAIP/TRIP, TDP2/TTRAP, TANK/ITRAF and TRAF3IP1. Interaction with TNFRSF5/CD40 is modulated by TANK/ITRAF, which competes for the same binding site. Interacts with TICAM1. Interacts with TRAFD1. Interacts with OTUB1, OTUB2 and OTUD5. Interacts with RNF216, OPTN and TBK1. Identified in a complex with TRAF2, MAP3K14 and BIRC3. Upon exposure to bacterial lipopolysaccharide (LPS), recruited to a transient complex containing TLR4, TRAF3, TRAF6, IKBKG, MAP3K7, MYD88, TICAM1, BIRC2, BIRC3 and UBE2N. Interacts (via RING-type zinc finger domain) with SRC. Interacts with CARD14. Interacts (via MATH domain) with PTPN22; the interaction promotes TRAF3 polyubiquitination. Interacts with MAVS. Directly interacts with DDX3X; this interaction stimulates TRAF3 'Lys-63' ubiquitination. Interacts with IRF3. Interacts with IKBKE in the course of viral infection. Interacts with TRIM35. Interacts with GAPDH; promoting TRAF3 ubiquitination. Interacts with PPP3CA and PPP3CB. Interacts with RALGDS. Interacts with FBXO11. Undergoes 'Lys-48'-linked polyubiquitination, leading to its proteasomal degradation in response to signaling by TNFSF13B, TLR4 or through CD40. 'Lys-48'-linked polyubiquitinated form is deubiquitinated by OTUD7B, preventing TRAF3 proteolysis and over-activation of non-canonical NF-kappa-B. Undergoes 'Lys-63'-linked ubiquitination during early stages of virus infection, and 'Lys-48'-linked ubiquitination during later stages. Undergoes both 'Lys-48'-linked and 'Lys-63'-linked ubiquitination in response to TLR3 and TLR4 signaling. 'Lys-63'-linked ubiquitination can be mediated by TRIM35. Deubiquitinated by OTUB1, OTUB2 and OTUD5. Undergoes 'Lys-63'-linked deubiquitination by MYSM1 to terminate the pattern-recognition receptors/PRRs pathways. Ubiquitinated at Lys-328 by the SCF(FBXL2) complex, leading to its degradation by the proteasome. In terms of processing, undergoes 'Lys-48'-linked polyubiquitination, leading to its proteasomal degradation in response to signaling by TNFSF13B, TLR4 or through CD40. 'Lys-48'-linked polyubiquitinated form is deubiquitinated by OTUD7B, preventing TRAF3 proteolysis and over-activation of non-canonical NF-kappa-B. Undergoes 'Lys-63'-linked ubiquitination during early stages of virus infection, and 'Lys-48'-linked ubiquitination during later stages. Undergoes both 'Lys-48'-linked and 'Lys-63'-linked ubiquitination in response to TLR3 and TLR4 signaling. 'Lys-63'-linked ubiquitination can be mediated by TRIM35. Deubiquitinated by OTUB1, OTUB2 and OTUD5. Undergoes 'Lys-63'-linked deubiquitination by MYSM1 to terminate the pattern-recognition receptors/PRRs pathways. Also undergoes 'Lys-29'-linked ubiquitination on Cys-55 and Cys-123 by NEDD4L; leading to increased 'Lys-48'- and 'Lys-63'-linked ubiquitination as well as increased binding to TBK1. TLR4 signals emanating from bacteria containing vesicles trigger 'Lys-33'-linked polyubiquitination that promotes the assembly of the exocyst complex thereby connecting innate immune signaling to the cellular trafficking apparatus. Deubiquitinated by USP25 during viral infection, leading to TRAF3 stabilization and type I interferon production. 'Lys-63'-linked ubiquitination by FBXO11 in a NEDD8-dependent manner promotes the amplification of IFN-I signaling. As to expression, detected in bone marrow macrophages and spleen B-cells (at protein level). In adult, highest in brain. Also found in kidney, heart, thymus, spleen, lung, muscle, testis and ovary. Not found in liver.

It is found in the cytoplasm. It localises to the endosome. Its subcellular location is the mitochondrion. The catalysed reaction is S-ubiquitinyl-[E2 ubiquitin-conjugating enzyme]-L-cysteine + [acceptor protein]-L-lysine = [E2 ubiquitin-conjugating enzyme]-L-cysteine + N(6)-ubiquitinyl-[acceptor protein]-L-lysine.. Functionally, cytoplasmic E3 ubiquitin ligase that regulates various signaling pathways, such as the NF-kappa-B, mitogen-activated protein kinase (MAPK) and interferon regulatory factor (IRF) pathways, and thus controls a lot of biological processes in both immune and non-immune cell types. In TLR and RLR signaling pathways, acts as an E3 ubiquitin ligase promoting the synthesis of 'Lys-63'-linked polyubiquitin chains on several substrates such as ASC that lead to the activation of the type I interferon response or the inflammasome. Following the activation of certain TLRs such as TLR4, acts as a negative NF-kappa-B regulator, possibly to avoid unregulated inflammatory response, and its degradation via 'Lys-48'-linked polyubiquitination is required for MAPK activation and production of inflammatory cytokines. Alternatively, when TLR4 orchestrates bacterial expulsion, TRAF3 undergoes 'Lys-33'-linked polyubiquitination and subsequently binds to RALGDS, mobilizing the exocyst complex to rapidly expel intracellular bacteria back for clearance. Also acts as a constitutive negative regulator of the alternative NF-kappa-B pathway, which controls B-cell survival and lymphoid organ development. Required for normal antibody isotype switching from IgM to IgG. Plays a role T-cell dependent immune responses. Down-regulates proteolytic processing of NFKB2, and thereby inhibits non-canonical activation of NF-kappa-B. Promotes ubiquitination and proteasomal degradation of MAP3K14. The polypeptide is TNF receptor-associated factor 3 (Mus musculus (Mouse)).